A 354-amino-acid polypeptide reads, in one-letter code: 3-isopropylmalate dehydrogenase (354 aa).

73–86 is an NAD(+) binding site; sequence GPAYDKLDRPLRPE. Substrate-binding residues include Arg93, Arg103, Arg131, and Asp221. 3 residues coordinate Mg(2+): Asp221, Asp245, and Asp249. 279–291 lines the NAD(+) pocket; that stretch reads GSAPDIAGQNLAN.

The protein belongs to the isocitrate and isopropylmalate dehydrogenases family. LeuB type 1 subfamily. As to quaternary structure, homodimer. It depends on Mg(2+) as a cofactor. The cofactor is Mn(2+).

The protein localises to the cytoplasm. It carries out the reaction (2R,3S)-3-isopropylmalate + NAD(+) = 4-methyl-2-oxopentanoate + CO2 + NADH. The protein operates within amino-acid biosynthesis; L-leucine biosynthesis; L-leucine from 3-methyl-2-oxobutanoate: step 3/4. Its function is as follows. Catalyzes the oxidation of 3-carboxy-2-hydroxy-4-methylpentanoate (3-isopropylmalate) to 3-carboxy-4-methyl-2-oxopentanoate. The product decarboxylates to 4-methyl-2 oxopentanoate. In Chromobacterium violaceum (strain ATCC 12472 / DSM 30191 / JCM 1249 / CCUG 213 / NBRC 12614 / NCIMB 9131 / NCTC 9757 / MK), this protein is 3-isopropylmalate dehydrogenase.